Here is a 485-residue protein sequence, read N- to C-terminus: Cysteine--tRNA ligase (485 aa).

Cys-27 serves as a coordination point for Zn(2+). Residues Ile-29–His-39 carry the 'HIGH' region motif. The Zn(2+) site is built by Cys-208, His-233, and Glu-237. The short motif at Lys-265–Ser-269 is the 'KMSKS' region element. Lys-268 is an ATP binding site.

It belongs to the class-I aminoacyl-tRNA synthetase family. As to quaternary structure, monomer. Zn(2+) serves as cofactor.

The protein localises to the cytoplasm. It catalyses the reaction tRNA(Cys) + L-cysteine + ATP = L-cysteinyl-tRNA(Cys) + AMP + diphosphate. This is Cysteine--tRNA ligase from Oleidesulfovibrio alaskensis (strain ATCC BAA-1058 / DSM 17464 / G20) (Desulfovibrio alaskensis).